The chain runs to 146 residues: Lysozyme C (146 aa).

A signal peptide spans 1-16 (SGKYISWEDSCSYLQL). Residues 17-146 (QKYERCELAK…LSQWTQGCKL (130 aa)) enclose the C-type lysozyme domain. 4 disulfide bridges follow: cysteine 22/cysteine 144, cysteine 46/cysteine 132, cysteine 81/cysteine 97, and cysteine 93/cysteine 111. Catalysis depends on residues glutamate 51 and aspartate 69.

Belongs to the glycosyl hydrolase 22 family. Expressed by the skin glands.

It is found in the secreted. The catalysed reaction is Hydrolysis of (1-&gt;4)-beta-linkages between N-acetylmuramic acid and N-acetyl-D-glucosamine residues in a peptidoglycan and between N-acetyl-D-glucosamine residues in chitodextrins.. Its function is as follows. Lysozymes have primarily a bacteriolytic function; those in tissues and body fluids are associated with the monocyte-macrophage system and enhance the activity of immunoagents. Has antibacterial activity against the Gram-positive bacterium S.aureus and against the Gram-negative bacterium E.coli with a MIC of 1 uM and 8 uM respectively. No antifungal activity against C.albicans. This is Lysozyme C from Bufo gargarizans andrewsi (Andrew's toad).